A 244-amino-acid chain; its full sequence is Thiol S-methyltransferase TMT1B (244 aa).

The first 23 residues, 1–23 (MDILVPLLQLLVLLLTLPLHLMA), serve as a signal peptide directing secretion.

It belongs to the methyltransferase superfamily. Expressed in the liver.

The protein localises to the endoplasmic reticulum membrane. It is found in the lipid droplet. It localises to the microsome. Its subcellular location is the cytoplasm. The protein resides in the cytosol. It carries out the reaction a thiol + S-adenosyl-L-methionine = a methyl thioether + S-adenosyl-L-homocysteine + H(+). In terms of biological role, thiol S-methyltransferase that catalyzes the transfer of a methyl group from S-adenosyl-L-methionine to alkyl and phenolic thiol-containing acceptor substrates. Together with TMT1B accounts for most of S-thiol methylation activity in the endoplasmic reticulum of hepatocytes. Selectively methylates S-centered nucleophiles from metabolites such as hydrogen sulfide and dithiothreitol. The sequence is that of Thiol S-methyltransferase TMT1B from Homo sapiens (Human).